The primary structure comprises 33 residues: Gastrin (33 aa).

Gln1 is subject to Pyrrolidone carboxylic acid. Tyr28 bears the Sulfotyrosine mark. Phe33 carries the phenylalanine amide modification.

The protein belongs to the gastrin/cholecystokinin family. In terms of processing, sulfation enhances proteolytic processing, and blocks peptide degradation. Levels of sulfation differ between proteolytically-cleaved gastrins and between tissues.

It localises to the secreted. Its function is as follows. Gastrin stimulates the stomach mucosa to produce and secrete hydrochloric acid and the pancreas to secrete its digestive enzymes. It also stimulates smooth muscle contraction and increases blood circulation and water secretion in the stomach and intestine. In Macropus giganteus (Eastern gray kangaroo), this protein is Gastrin (GAST).